A 197-amino-acid polypeptide reads, in one-letter code: Molybdenum cofactor guanylyltransferase (197 aa).

Residues L12 to G14, K25, N53, D71, and D101 contribute to the GTP site. D101 serves as a coordination point for Mg(2+).

The protein belongs to the MobA family. In terms of assembly, monomer. The cofactor is Mg(2+).

Its subcellular location is the cytoplasm. The enzyme catalyses Mo-molybdopterin + GTP + H(+) = Mo-molybdopterin guanine dinucleotide + diphosphate. Transfers a GMP moiety from GTP to Mo-molybdopterin (Mo-MPT) cofactor (Moco or molybdenum cofactor) to form Mo-molybdopterin guanine dinucleotide (Mo-MGD) cofactor. The polypeptide is Molybdenum cofactor guanylyltransferase (Bordetella pertussis (strain Tohama I / ATCC BAA-589 / NCTC 13251)).